The chain runs to 600 residues: Aspartate--tRNA(Asp/Asn) ligase (600 aa).

E175 contributes to the L-aspartate binding site. The tract at residues 199 to 202 (QLFK) is aspartate. R221 lines the L-aspartate pocket. Residues 221-223 (RDE) and Q230 contribute to the ATP site. H453 serves as a coordination point for L-aspartate. E487 contributes to the ATP binding site. R494 contributes to the L-aspartate binding site. 539–542 (GWDR) serves as a coordination point for ATP. The disordered stretch occupies residues 564 to 600 (GGVDPLTDAPAPITPLQRKESGIDAKPKAAENKPEEK). The span at 580-600 (QRKESGIDAKPKAAENKPEEK) shows a compositional bias: basic and acidic residues.

This sequence belongs to the class-II aminoacyl-tRNA synthetase family. Type 1 subfamily. As to quaternary structure, homodimer.

It is found in the cytoplasm. The enzyme catalyses tRNA(Asx) + L-aspartate + ATP = L-aspartyl-tRNA(Asx) + AMP + diphosphate. Aspartyl-tRNA synthetase with relaxed tRNA specificity since it is able to aspartylate not only its cognate tRNA(Asp) but also tRNA(Asn). Reaction proceeds in two steps: L-aspartate is first activated by ATP to form Asp-AMP and then transferred to the acceptor end of tRNA(Asp/Asn). The polypeptide is Aspartate--tRNA(Asp/Asn) ligase (Corynebacterium efficiens (strain DSM 44549 / YS-314 / AJ 12310 / JCM 11189 / NBRC 100395)).